Consider the following 414-residue polypeptide: CinA-like protein (414 aa).

This sequence belongs to the CinA family.

This chain is CinA-like protein, found in Acidobacterium capsulatum (strain ATCC 51196 / DSM 11244 / BCRC 80197 / JCM 7670 / NBRC 15755 / NCIMB 13165 / 161).